The chain runs to 1047 residues: Probable alpha-mannosidase At5g66150 (1047 aa).

An N-terminal signal peptide occupies residues 1–27; that stretch reads MEKPGMSLLKGSLCVIVFLLLLSLVES. His-56, Asp-58, and Asp-178 together coordinate Zn(2+). Residues Asn-280, Asn-287, and Asn-345 are each glycosylated (N-linked (GlcNAc...) asparagine). His-419 is a Zn(2+) binding site. 2 disulfides stabilise this stretch: Cys-455–Cys-465 and Cys-476–Cys-484. N-linked (GlcNAc...) asparagine glycosylation is found at Asn-480, Asn-508, Asn-541, Asn-605, Asn-606, Asn-668, Asn-780, and Asn-857. The cysteines at positions 855 and 860 are disulfide-linked.

Belongs to the glycosyl hydrolase 38 family. In terms of assembly, homodimer. Zn(2+) is required as a cofactor.

It localises to the vacuole. It carries out the reaction Hydrolysis of terminal, non-reducing alpha-D-mannose residues in alpha-D-mannosides.. In terms of biological role, liberates mannose from p-nitrophenyl-alpha-D-mannoside in vitro. In Arabidopsis thaliana (Mouse-ear cress), this protein is Probable alpha-mannosidase At5g66150.